We begin with the raw amino-acid sequence, 152 residues long: Transcriptional regulator MraZ (152 aa).

SpoVT-AbrB domains lie at 5-52 (INAI…TAAQ) and 81-124 (ATDV…NKEL).

This sequence belongs to the MraZ family. In terms of assembly, forms oligomers.

The protein localises to the cytoplasm. Its subcellular location is the nucleoid. The polypeptide is Transcriptional regulator MraZ (Legionella pneumophila (strain Paris)).